A 243-amino-acid polypeptide reads, in one-letter code: NAD(P)H-quinone oxidoreductase subunit K, chloroplastic (243 aa).

[4Fe-4S] cluster contacts are provided by C65, C66, C130, and C161.

It belongs to the complex I 20 kDa subunit family. As to quaternary structure, NDH is composed of at least 16 different subunits, 5 of which are encoded in the nucleus. [4Fe-4S] cluster serves as cofactor.

It is found in the plastid. It localises to the chloroplast thylakoid membrane. It catalyses the reaction a plastoquinone + NADH + (n+1) H(+)(in) = a plastoquinol + NAD(+) + n H(+)(out). The enzyme catalyses a plastoquinone + NADPH + (n+1) H(+)(in) = a plastoquinol + NADP(+) + n H(+)(out). Its function is as follows. NDH shuttles electrons from NAD(P)H:plastoquinone, via FMN and iron-sulfur (Fe-S) centers, to quinones in the photosynthetic chain and possibly in a chloroplast respiratory chain. The immediate electron acceptor for the enzyme in this species is believed to be plastoquinone. Couples the redox reaction to proton translocation, and thus conserves the redox energy in a proton gradient. The sequence is that of NAD(P)H-quinone oxidoreductase subunit K, chloroplastic from Marchantia polymorpha (Common liverwort).